Reading from the N-terminus, the 123-residue chain is MSKYEEVAVHGYEEFCKAVSDRKGKEIFAYFSGDKDEHGKSWCPDCVKAEPVVRAELPHLPEGTVFIYCQVGDRPYWKDSNNDFKKTLKLTGVPTLLRYGTPQKLVEEECFKADLVRMMFTED.

In terms of domain architecture, Thioredoxin spans 41–123 (SWCPDCVKAE…DLVRMMFTED (83 aa)). Residues C43 and C46 each act as nucleophile in the active site. C43 and C46 are joined by a disulfide.

The protein belongs to the thioredoxin family.

The protein localises to the cytoplasm. In terms of biological role, disulfide reductase. May participate in various redox reactions through the reversible oxidation of its active center dithiol to a disulfide and catalyze dithiol-disulfide exchange reactions. Has peroxidase activity and may contribute to the elimination of cellular hydrogen peroxide. This is Thioredoxin domain-containing protein 17 (txndc17) from Danio rerio (Zebrafish).